A 703-amino-acid polypeptide reads, in one-letter code: NADH-quinone oxidoreductase chain 12 (703 aa).

16 helical membrane passes run 4-24, 30-50, 79-99, 116-136, 138-158, 179-199, 224-244, 256-276, 290-310, 325-345, 346-366, 381-401, 415-435, 475-495, 580-600, and 679-699; these read FVLF…RAIG, YLTT…FLSF, LTAI…MYSL, ARFF…VTAD, LLQM…LIGF, GDFG…SVQF, ANLL…QLLL, TPVS…FLVC, NFIV…GLVQ, LGYM…FHLL, THAF…HAMH, IPLT…VGIP, AIIE…VIAA, LGVL…PFFG, VSPF…YIAN, and LFHY…WVMM.

The protein belongs to the complex I subunit 5 family. As to quaternary structure, NDH-1 is composed of at least 14 different subunits, Nqo1 to Nqo14. The complex has a L-shaped structure, with the hydrophobic arm (subunits Nqo7, Nqo8, Nqo10 to Nqo14) embedded in the inner membrane and the hydrophilic peripheral arm (subunits Nqo1 to Nqo6, Nqo9) protruding into the bacterial cytoplasm. The hydrophilic domain contains all the redox centers.

It is found in the cell inner membrane. The catalysed reaction is a quinone + NADH + 5 H(+)(in) = a quinol + NAD(+) + 4 H(+)(out). Its function is as follows. NDH-1 shuttles electrons from NADH, via FMN and iron-sulfur (Fe-S) centers, to quinones in the respiratory chain. The immediate electron acceptor for the enzyme in this species is believed to be ubiquinone. Couples the redox reaction to proton translocation (for every two electrons transferred, four hydrogen ions are translocated across the cytoplasmic membrane), and thus conserves the redox energy in a proton gradient. The polypeptide is NADH-quinone oxidoreductase chain 12 (Paracoccus denitrificans).